A 156-amino-acid chain; its full sequence is Deoxyuridine 5'-triphosphate nucleotidohydrolase (156 aa).

Residues 76–78 (RSG), Asn-89, 93–95 (TVD), and Lys-103 contribute to the substrate site.

The protein belongs to the dUTPase family. Mg(2+) is required as a cofactor.

It carries out the reaction dUTP + H2O = dUMP + diphosphate + H(+). It functions in the pathway pyrimidine metabolism; dUMP biosynthesis; dUMP from dCTP (dUTP route): step 2/2. In terms of biological role, this enzyme is involved in nucleotide metabolism: it produces dUMP, the immediate precursor of thymidine nucleotides and it decreases the intracellular concentration of dUTP so that uracil cannot be incorporated into DNA. The polypeptide is Deoxyuridine 5'-triphosphate nucleotidohydrolase (Rhizobium etli (strain CIAT 652)).